The sequence spans 98 residues: NADH-ubiquinone oxidoreductase chain 4L (98 aa).

3 consecutive transmembrane segments (helical) span residues 1 to 21, 25 to 45, and 57 to 79; these read MLAINLNLTVAFMLALTGVLV, HLMSTLLCLEGMMLSLFILMT, and SMAPLILLVFSACEAGVGLALLV.

This sequence belongs to the complex I subunit 4L family. Core subunit of respiratory chain NADH dehydrogenase (Complex I) which is composed of 45 different subunits.

Its subcellular location is the mitochondrion inner membrane. It carries out the reaction a ubiquinone + NADH + 5 H(+)(in) = a ubiquinol + NAD(+) + 4 H(+)(out). Its function is as follows. Core subunit of the mitochondrial membrane respiratory chain NADH dehydrogenase (Complex I) which catalyzes electron transfer from NADH through the respiratory chain, using ubiquinone as an electron acceptor. Part of the enzyme membrane arm which is embedded in the lipid bilayer and involved in proton translocation. The protein is NADH-ubiquinone oxidoreductase chain 4L (MT-ND4L) of Dasyurus hallucatus (Northern quoll).